We begin with the raw amino-acid sequence, 334 residues long: Aspartate carbamoyltransferase catalytic subunit (334 aa).

The carbamoyl phosphate site is built by arginine 71 and threonine 72. Lysine 99 provides a ligand contact to L-aspartate. Carbamoyl phosphate-binding residues include arginine 121, histidine 151, and glutamine 154. L-aspartate contacts are provided by arginine 184 and arginine 239. Carbamoyl phosphate is bound by residues glycine 280 and proline 281.

The protein belongs to the aspartate/ornithine carbamoyltransferase superfamily. ATCase family. In terms of assembly, heterododecamer (2C3:3R2) of six catalytic PyrB chains organized as two trimers (C3), and six regulatory PyrI chains organized as three dimers (R2).

It catalyses the reaction carbamoyl phosphate + L-aspartate = N-carbamoyl-L-aspartate + phosphate + H(+). It functions in the pathway pyrimidine metabolism; UMP biosynthesis via de novo pathway; (S)-dihydroorotate from bicarbonate: step 2/3. Catalyzes the condensation of carbamoyl phosphate and aspartate to form carbamoyl aspartate and inorganic phosphate, the committed step in the de novo pyrimidine nucleotide biosynthesis pathway. In Pseudomonas putida (Arthrobacter siderocapsulatus), this protein is Aspartate carbamoyltransferase catalytic subunit.